Consider the following 146-residue polypeptide: 3-hydroxyacyl-[acyl-carrier-protein] dehydratase FabZ (146 aa).

The active site involves His51.

This sequence belongs to the thioester dehydratase family. FabZ subfamily.

It is found in the cytoplasm. It catalyses the reaction a (3R)-hydroxyacyl-[ACP] = a (2E)-enoyl-[ACP] + H2O. Its function is as follows. Involved in unsaturated fatty acids biosynthesis. Catalyzes the dehydration of short chain beta-hydroxyacyl-ACPs and long chain saturated and unsaturated beta-hydroxyacyl-ACPs. This is 3-hydroxyacyl-[acyl-carrier-protein] dehydratase FabZ from Staphylococcus aureus (strain Mu3 / ATCC 700698).